A 283-amino-acid chain; its full sequence is Nucleotide-binding protein DR_1434 (283 aa).

Residue 8-15 (GLSGSGKS) coordinates ATP. 57–60 (DTRT) serves as a coordination point for GTP.

This sequence belongs to the RapZ-like family.

Its function is as follows. Displays ATPase and GTPase activities. This Deinococcus radiodurans (strain ATCC 13939 / DSM 20539 / JCM 16871 / CCUG 27074 / LMG 4051 / NBRC 15346 / NCIMB 9279 / VKM B-1422 / R1) protein is Nucleotide-binding protein DR_1434.